A 384-amino-acid polypeptide reads, in one-letter code: uncharacterized protein (384 aa).

The disordered stretch occupies residues 1-116 (MTEMPKKKFS…FPAAPPPMDS (116 aa)). Basic and acidic residues-rich tracts occupy residues 14–70 (ARGD…RAGD) and 78–95 (RFKD…DRPR). 3 residues coordinate S-adenosyl-L-methionine: Gly-318, Ile-338, and Leu-347.

Belongs to the class IV-like SAM-binding methyltransferase superfamily. RNA methyltransferase TrmH family.

This is an uncharacterized protein from Synechocystis sp. (strain ATCC 27184 / PCC 6803 / Kazusa).